Consider the following 117-residue polypeptide: DNA-directed RNA polymerase subunit omega (117 aa).

This sequence belongs to the RNA polymerase subunit omega family. As to quaternary structure, the RNAP catalytic core consists of 2 alpha, 1 beta, 1 beta' and 1 omega subunit. When a sigma factor is associated with the core the holoenzyme is formed, which can initiate transcription.

It carries out the reaction RNA(n) + a ribonucleoside 5'-triphosphate = RNA(n+1) + diphosphate. In terms of biological role, promotes RNA polymerase assembly. Latches the N- and C-terminal regions of the beta' subunit thereby facilitating its interaction with the beta and alpha subunits. This is DNA-directed RNA polymerase subunit omega from Ruegeria pomeroyi (strain ATCC 700808 / DSM 15171 / DSS-3) (Silicibacter pomeroyi).